The following is a 207-amino-acid chain: MYSFLFKYIIIGDTGVGKSCLLLQFTDKRFQPVHDLTIGVEFGARMITIDNKAIKLQIWDTAGQESFRSITRSYYRGSAGALLVYDITRRDTFNHLTCWLKDARSYANSNMTIILIGNKSDMESKRAVSYEEGRQFADENGLIFLETSAKTASNVEEAFVNTASKIYEKIQKGDFDINNESFGIKLGAPTSKQDGTDQKPAGGGCCK.

12-20 lines the GTP pocket; that stretch reads GDTGVGKSC. The Effector region motif lies at 34–42; it reads HDLTIGVEF. GTP-binding positions include 60–64, 118–121, and 148–150; these read DTAGQ, NKSD, and SAK. Residues 187–207 form a disordered region; the sequence is GAPTSKQDGTDQKPAGGGCCK. Residues cysteine 205 and cysteine 206 are each lipidated (S-geranylgeranyl cysteine).

This sequence belongs to the small GTPase superfamily. Rab family.

The protein localises to the cell membrane. The catalysed reaction is GTP + H2O = GDP + phosphate + H(+). With respect to regulation, regulated by guanine nucleotide exchange factors (GEFs) which promote the exchange of bound GDP for free GTP, GTPase activating proteins (GAPs) which increase the GTP hydrolysis activity, and GDP dissociation inhibitors which inhibit the dissociation of the nucleotide from the GTPase. Its function is as follows. The small GTPases Rab are key regulators of intracellular membrane trafficking, from the formation of transport vesicles to their fusion with membranes. Rabs cycle between active GTP-bound and inactive GDP-bound states. In their active state, drive transport of vesicular carriers from donor organelles to acceptor organelles to regulate the membrane traffic that maintains organelle identity and morphology. This is Ras-related protein Rab-2A (rab2A) from Dictyostelium discoideum (Social amoeba).